An 834-amino-acid polypeptide reads, in one-letter code: Ras GTPase-activating protein 3 (834 aa).

C2 domains are found at residues 1–112 and 123–263; these read MAVE…DTWF and VQGK…EAWY. The residue at position 2 (alanine 2) is an N-acetylalanine. Tyrosine 66 carries the post-translational modification Phosphotyrosine. Serine 77 bears the Phosphoserine mark. Threonine 110 is modified (phosphothreonine). The region spanning 346–561 is the Ras-GAP domain; it reads GRVVPFISAI…DAVKNFLDLI (216 aa). A PH domain is found at 576–677; it reads ILLKEGFMIK…WIDILTKVSQ (102 aa). The Btk-type zinc-finger motif lies at 679–715; sequence NQKRLAVYHPSAYLNGHWLCCRASSDTAAGCSPCTGG. Residues histidine 687, cysteine 698, cysteine 699, and cysteine 709 each coordinate Zn(2+). Residues 806 to 834 are disordered; the sequence is KYGSQEHPIGDKSFQSYIRQQSETPAHSM. Phosphoserine occurs at positions 809 and 833. The segment covering 818–834 has biased composition (polar residues); it reads SFQSYIRQQSETPAHSM.

Inhibitory regulator of the Ras-cyclic AMP pathway. May bind inositol tetrakisphosphate (IP4). This is Ras GTPase-activating protein 3 (RASA3) from Bos taurus (Bovine).